The sequence spans 345 residues: Metal-dependent phosphohydrolase cns2 (345 aa).

Residues Arg-70–Ala-171 form the HD domain.

In terms of assembly, interacts with cns1.

The protein localises to the lipid droplet. The protein operates within secondary metabolite biosynthesis. In terms of biological role, metal-dependent phosphohydrolase; part of the gene cluster that mediates the biosynthesis of cordycepin (COR) and pentostatin (PTN), two adenosine analogs with related bioactivity profiles as both mimic adenosine and can inhibit some of the processes that are adenosine dependent. Within the pathway, cns2 catalyzes dephosphorylation of 3'-AMP to produce 2'-carbonyl-3'-deoxyadenosine (2'-C-3'-dA). The first step of cordycepin biosynthesis involves hydroxyl phosphorylation of the 3'-OH position on adenosine to produce adenosine-3'-monophosphate (3'-AMP), catalyzed by kinase activity of cns3. Next, 3'-AMP is dephosphorylated to 2'-carbonyl-3'-deoxyadenosine by cns2, which is finally converted to cordycepin (3'-deoxyadenosine) by the oxidoreductase cns1. This is Metal-dependent phosphohydrolase cns2 from Cordyceps militaris (strain CM01) (Caterpillar fungus).